Here is a 248-residue protein sequence, read N- to C-terminus: Probable transcriptional regulatory protein RPE_4771 (248 aa).

The interval 1-21 (MAGHSQFKNIMHRKGRQDAQK) is disordered.

It belongs to the TACO1 family.

Its subcellular location is the cytoplasm. The chain is Probable transcriptional regulatory protein RPE_4771 from Rhodopseudomonas palustris (strain BisA53).